We begin with the raw amino-acid sequence, 602 residues long: Elongation factor 4 (602 aa).

Residues 7–189 (KYIRNFSIVA…AIVNKVPAPE (183 aa)) enclose the tr-type G domain. GTP-binding positions include 19-24 (DHGKST) and 136-139 (NKID).

This sequence belongs to the TRAFAC class translation factor GTPase superfamily. Classic translation factor GTPase family. LepA subfamily.

It localises to the cell membrane. The enzyme catalyses GTP + H2O = GDP + phosphate + H(+). In terms of biological role, required for accurate and efficient protein synthesis under certain stress conditions. May act as a fidelity factor of the translation reaction, by catalyzing a one-codon backward translocation of tRNAs on improperly translocated ribosomes. Back-translocation proceeds from a post-translocation (POST) complex to a pre-translocation (PRE) complex, thus giving elongation factor G a second chance to translocate the tRNAs correctly. Binds to ribosomes in a GTP-dependent manner. This chain is Elongation factor 4, found in Clostridium botulinum (strain Okra / Type B1).